Here is a 432-residue protein sequence, read N- to C-terminus: MTTSIRQFTSSSSIKGSSGLGGGSSRTSCRLSGGLGAGSCRLGSAGGLGSTLGGSSYSSCYSFGSGGGYGSSFGGVDGLLAGGEKATMQNLNDRLASYLDKVRALEEANTELEVKIRDWYQRQAPGPARDYSQYYRTIEELQNKILTATVDNANILLQIDNARLAADDFRTKFETEQALRLSVEADINGLRRVLDELTLARADLEMQIENLKEELAYLKKNHEEEMNALRGQVGGEINVEMDAAPGVDLSRILNEMRDQYEKMAEKNRKDAEDWFFSKTEELNREVATNSELVQSGKSEISELRRTMQALEIELQSQLSMKASLEGNLAETENRYCVQLSQIQGLIGSVEEQLAQLRCEMEQQNQEYKILLDVKTRLEQEIATYRRLLEGEDAHLTQYKKEPVTTRQVRTIVEEVQDGKVISSREQVHQTTR.

Residues 1-24 are disordered; it reads MTTSIRQFTSSSSIKGSSGLGGGS. The head stretch occupies residues 1–83; that stretch reads MTTSIRQFTS…GGVDGLLAGG (83 aa). Residues Ser12 and Ser13 each carry the phosphoserine modification. Residue Lys15 forms a Glycyl lysine isopeptide (Lys-Gly) (interchain with G-Cter in SUMO1); alternate linkage. Lys15 is covalently cross-linked (Glycyl lysine isopeptide (Lys-Gly) (interchain with G-Cter in SUMO2); alternate). Phosphoserine is present on residues Ser25, Ser32, and Ser39. Ser44 bears the Phosphoserine; by RPS6KA1 mark. The coil 1A stretch occupies residues 84–120; the sequence is EKATMQNLNDRLASYLDKVRALEEANTELEVKIRDWY. The region spanning 84–395 is the IF rod domain; that stretch reads EKATMQNLND…RLLEGEDAHL (312 aa). Positions 102 to 116 are peptide epitope S1; induces T-cell and keratinocyte proliferation and IFN-gamma production; sequence VRALEEANTELEVKI. Position 110 is a phosphothreonine (Thr110). The interval 121 to 138 is linker 1; it reads QRQAPGPARDYSQYYRTI. Residues 139 to 230 form a coil 1B region; sequence EELQNKILTA…NHEEEMNALR (92 aa). The interval 153 to 167 is peptide epitope S2; induces T-cell proliferation and IFN-gamma production; sequence ANILLQIDNARLAAD. Positions 231 to 250 are linker 12; that stretch reads GQVGGEINVEMDAAPGVDLS. Residues 251 to 392 are coil 2; sequence RILNEMRDQY…TYRRLLEGED (142 aa). Lys278 participates in a covalent cross-link: Glycyl lysine isopeptide (Lys-Gly) (interchain with G-Cter in SUMO2). Position 279 is a phosphothreonine (Thr279). Residue Ser323 is modified to Phosphoserine. The tract at residues 332-346 is peptide epitope S4; induces T-cell and keratinocyte proliferation and IFN-gamma production; the sequence is ENRYCVQLSQIQGLI. The tract at residues 393–432 is tail; that stretch reads AHLTQYKKEPVTTRQVRTIVEEVQDGKVISSREQVHQTTR. Glycyl lysine isopeptide (Lys-Gly) (interchain with G-Cter in SUMO1); alternate cross-links involve residues Lys399, Lys400, and Lys419. Glycyl lysine isopeptide (Lys-Gly) (interchain with G-Cter in SUMO2); alternate cross-links involve residues Lys399, Lys400, and Lys419.

Belongs to the intermediate filament family. In terms of assembly, heterodimer of a type I and a type II keratin. KRT17 associates with KRT6 isomers (KRT6A or KRT6B). Interacts with TRADD and SFN. Phosphorylation at Ser-44 occurs in a growth- and stress-dependent fashion in skin keratinocytes, it has no effect on filament organization. As to expression, expressed in the outer root sheath and medulla region of hair follicle specifically from eyebrow and beard, digital pulp, nail matrix and nail bed epithelium, mucosal stratified squamous epithelia and in basal cells of oral epithelium, palmoplantar epidermis and sweat and mammary glands. Also expressed in myoepithelium of prostate, basal layer of urinary bladder, cambial cells of sebaceous gland and in exocervix (at protein level).

The protein localises to the cytoplasm. Its function is as follows. Type I keratin involved in the formation and maintenance of various skin appendages, specifically in determining shape and orientation of hair. Required for the correct growth of hair follicles, in particular for the persistence of the anagen (growth) state. Modulates the function of TNF-alpha in the specific context of hair cycling. Regulates protein synthesis and epithelial cell growth through binding to the adapter protein SFN and by stimulating Akt/mTOR pathway. Involved in tissue repair. May be a marker of basal cell differentiation in complex epithelia and therefore indicative of a certain type of epithelial 'stem cells'. Acts as a promoter of epithelial proliferation by acting a regulator of immune response in skin: promotes Th1/Th17-dominated immune environment contributing to the development of basaloid skin tumors. May act as an autoantigen in the immunopathogenesis of psoriasis, with certain peptide regions being a major target for autoreactive T-cells and hence causing their proliferation. This chain is Keratin, type I cytoskeletal 17 (KRT17), found in Homo sapiens (Human).